A 761-amino-acid polypeptide reads, in one-letter code: Zinc finger protein 287 (761 aa).

In terms of domain architecture, SCAN box spans 49–131 (RQNFRNFPYP…TLVEDLTQIL (83 aa)). Positions 134-154 (EAPQNSTLSQDTPEEDPRGKH) are disordered. The KRAB domain occupies 170 to 238 (MTFKDVAVDI…IKEILEGPSP (69 aa)). C2H2-type zinc fingers lie at residues 368 to 390 (YKCNVCGKKFRKYPSLLKHQSTH), 396 to 418 (YECEECGKEFRHISSLIAHQRMH), 424 to 446 (YECHQCGKAFSQRAHLTIHQRIH), 452 to 474 (YKCDDCGKDFSQRAHLTIHQRTH), 480 to 502 (YKCLECGKTFSHSSSLINHQRVH), 508 to 530 (YICNECGKTFSQSTHLLQHQKIH), 536 to 558 (YKCNECWKVFSQSTYLIRHQRIH), 564 to 586 (YKCNECGKAFAHSSTLIQHQTTH), 592 to 614 (YICNICGKAFSQSANLTQHHRTH), 620 to 642 (YKCSVCGKAFSQSVHLTQHQRIH), 648 to 670 (FKCNICGKAYRQGANLTQHQRIH), 676 to 698 (YKCNECGKAFIYSSSLNQHQRTH), 704 to 726 (YKCNECDKDFSQRTCLIQHQRIH), and 732 to 754 (YACRICGKTFTQSTNLIQHQRVH).

The protein belongs to the krueppel C2H2-type zinc-finger protein family.

The protein localises to the nucleus. Its function is as follows. May be involved in transcriptional regulation. The protein is Zinc finger protein 287 of Pongo pygmaeus (Bornean orangutan).